Reading from the N-terminus, the 98-residue chain is NADH-ubiquinone oxidoreductase chain 4L (98 aa).

The next 3 helical transmembrane spans lie at 1–21 (MSLV…GLLM), 29–49 (SLLC…LTIL), and 61–81 (IILL…LVMV).

Belongs to the complex I subunit 4L family. Core subunit of respiratory chain NADH dehydrogenase (Complex I) which is composed of 45 different subunits.

It is found in the mitochondrion inner membrane. The catalysed reaction is a ubiquinone + NADH + 5 H(+)(in) = a ubiquinol + NAD(+) + 4 H(+)(out). In terms of biological role, core subunit of the mitochondrial membrane respiratory chain NADH dehydrogenase (Complex I) which catalyzes electron transfer from NADH through the respiratory chain, using ubiquinone as an electron acceptor. Part of the enzyme membrane arm which is embedded in the lipid bilayer and involved in proton translocation. The protein is NADH-ubiquinone oxidoreductase chain 4L (MT-ND4L) of Elaphodus cephalophus (Tufted deer).